Consider the following 144-residue polypeptide: 3-hydroxyacyl-[acyl-carrier-protein] dehydratase FabZ (144 aa).

The active site involves His-48.

It belongs to the thioester dehydratase family. FabZ subfamily.

Its subcellular location is the cytoplasm. It catalyses the reaction a (3R)-hydroxyacyl-[ACP] = a (2E)-enoyl-[ACP] + H2O. Functionally, involved in unsaturated fatty acids biosynthesis. Catalyzes the dehydration of short chain beta-hydroxyacyl-ACPs and long chain saturated and unsaturated beta-hydroxyacyl-ACPs. The polypeptide is 3-hydroxyacyl-[acyl-carrier-protein] dehydratase FabZ (Bacillus pumilus (strain SAFR-032)).